The sequence spans 501 residues: Cytochrome P450 monooxygeanse terP (501 aa).

The helical transmembrane segment at 2–22 (PSLLLSLLLLQVPIICAWLLV) threads the bilayer. Residue Cys441 coordinates heme.

The protein belongs to the cytochrome P450 family. Requires heme as cofactor.

Its subcellular location is the membrane. The protein operates within secondary metabolite biosynthesis. Its function is as follows. Cytochrome P450 monooxygeanse; part of the gene cluster that mediates the biosynthesis of terpendoles, indole-diterpene (IDT) mycotoxins including terpendole I, terpendole K, terpendole C, as well as the kinesin Eg5 inhibitor terpendole E. TerP has dual activity and is able to convert terpendole E to 13-desoxyterpendole I and paspaline to 13-desoxypaxilline. Terpendoles biosynthesis begins with the synthesis of geranylgeranyl diphosphate (GGPP) by a yet unidentified GGPP synthase. Condensation of indole-3-glycerol phosphate with GGPP by the prenyltransferase terC then forms 3-geranylgeranylindole (3-GGI), followed by epoxidation and cyclization of this intermediate (by the FAD-dependent monooxygeanse terM and the terpene cyclase terB) to form paspaline. The cytochrome monooxygenase terQ then hydroxylates paspalline at C-11 to yield terpendole E. The cytochrome monooxygenase terP converts terpendole E to 13-desoxyterpendole I, and terQ converts 13-desoxyterpendole I into terpendole I. TerF and terK are required for conversion of terpendole I to terpendole C which is further converted to terpendole K. The protein is Cytochrome P450 monooxygeanse terP of Tolypocladium album (Soil fungus).